Consider the following 310-residue polypeptide: N-acetyl-gamma-glutamyl-phosphate reductase (310 aa).

The active site involves cysteine 117.

It belongs to the NAGSA dehydrogenase family. Type 2 subfamily.

The protein localises to the cytoplasm. The catalysed reaction is N-acetyl-L-glutamate 5-semialdehyde + phosphate + NADP(+) = N-acetyl-L-glutamyl 5-phosphate + NADPH + H(+). It functions in the pathway amino-acid biosynthesis; L-arginine biosynthesis; N(2)-acetyl-L-ornithine from L-glutamate: step 3/4. Functionally, catalyzes the NADPH-dependent reduction of N-acetyl-5-glutamyl phosphate to yield N-acetyl-L-glutamate 5-semialdehyde. This chain is N-acetyl-gamma-glutamyl-phosphate reductase, found in Brucella melitensis biotype 1 (strain ATCC 23456 / CCUG 17765 / NCTC 10094 / 16M).